We begin with the raw amino-acid sequence, 539 residues long: Glucans biosynthesis protein D (539 aa).

The segment at residues 1–29 is a signal peptide (tat-type signal); that stretch reads MNRRNLLKASMALAAYGSVSASGLFAARA.

This sequence belongs to the OpgD/OpgG family. Post-translationally, predicted to be exported by the Tat system. The position of the signal peptide cleavage has not been experimentally proven.

The protein resides in the periplasm. It participates in glycan metabolism; osmoregulated periplasmic glucan (OPG) biosynthesis. Probably involved in the control of the structural glucose backbone of osmoregulated periplasmic glucans (OPGs). The protein is Glucans biosynthesis protein D of Pseudomonas syringae pv. syringae (strain B728a).